A 34-amino-acid chain; its full sequence is Photosystem II reaction center protein T (34 aa).

Residues 3-23 (ALVYTFLLVSTLGIIFFAIFF) form a helical membrane-spanning segment.

It belongs to the PsbT family. As to quaternary structure, PSII is composed of 1 copy each of membrane proteins PsbA, PsbB, PsbC, PsbD, PsbE, PsbF, PsbH, PsbI, PsbJ, PsbK, PsbL, PsbM, PsbT, PsbY, PsbZ, Psb30/Ycf12, at least 3 peripheral proteins of the oxygen-evolving complex and a large number of cofactors. It forms dimeric complexes.

Its subcellular location is the plastid. It localises to the chloroplast thylakoid membrane. In terms of biological role, found at the monomer-monomer interface of the photosystem II (PS II) dimer, plays a role in assembly and dimerization of PSII. PSII is a light-driven water plastoquinone oxidoreductase, using light energy to abstract electrons from H(2)O, generating a proton gradient subsequently used for ATP formation. The protein is Photosystem II reaction center protein T of Solanum bulbocastanum (Wild potato).